Reading from the N-terminus, the 743-residue chain is Threonine synthase-like 1 (743 aa).

Lys281 carries the N6-acetyllysine modification. Residue Lys351 is modified to N6-(pyridoxal phosphate)lysine.

It belongs to the threonine synthase family. It depends on pyridoxal 5'-phosphate as a cofactor.

The chain is Threonine synthase-like 1 (THNSL1) from Homo sapiens (Human).